We begin with the raw amino-acid sequence, 284 residues long: Mediator of RNA polymerase II transcription subunit 4 (284 aa).

S2 bears the N-acetylserine mark. Residues 205–284 (RIPGEEVEET…DLDLFDPDDF (80 aa)) are disordered. Positions 225 to 238 (EEQKGQMAKKEGTP) are enriched in basic and acidic residues. T237 carries the phosphothreonine; by KIN28 modification. At S242 the chain carries Phosphoserine. Positions 248 to 265 (TAKEVGDEADNTKDKEKE) are enriched in basic and acidic residues. Over residues 266 to 284 (ENNDDALDLDLDLFDPDDF) the composition is skewed to acidic residues.

Belongs to the Mediator complex subunit 4 family. In terms of assembly, component of the Mediator complex, which is composed of at least 21 subunits that form three structurally distinct submodules. The Mediator head module contains MED6, MED8, MED11, SRB4/MED17, SRB5/MED18, ROX3/MED19, SRB2/MED20 and SRB6/MED22, the middle module contains MED1, MED4, NUT1/MED5, MED7, CSE2/MED9, NUT2/MED10, SRB7/MED21 and SOH1/MED31, and the tail module contains MED2, PGD1/MED3, RGR1/MED14, GAL11/MED15 and SIN4/MED16. The head and the middle modules interact directly with RNA polymerase II, whereas the elongated tail module interacts with gene-specific regulatory proteins. MED4 interacts directly with MED1, MED7 and SRB7/MED21.

Its subcellular location is the nucleus. Its function is as follows. Component of the Mediator complex, a coactivator involved in the regulated transcription of nearly all RNA polymerase II-dependent genes. Mediator functions as a bridge to convey information from gene-specific regulatory proteins to the basal RNA polymerase II transcription machinery. The Mediator complex, having a compact conformation in its free form, is recruited to promoters by direct interactions with regulatory proteins and serves for the assembly of a functional preinitiation complex with RNA polymerase II and the general transcription factors. The Mediator complex unfolds to an extended conformation and partially surrounds RNA polymerase II, specifically interacting with the unphosphorylated form of the C-terminal domain (CTD) of RNA polymerase II. The Mediator complex dissociates from the RNA polymerase II holoenzyme and stays at the promoter when transcriptional elongation begins. This chain is Mediator of RNA polymerase II transcription subunit 4 (MED4), found in Saccharomyces cerevisiae (strain ATCC 204508 / S288c) (Baker's yeast).